Consider the following 221-residue polypeptide: Protein-L-isoaspartate O-methyltransferase (221 aa).

The active site involves Ser-64.

It belongs to the methyltransferase superfamily. L-isoaspartyl/D-aspartyl protein methyltransferase family.

It is found in the cytoplasm. The enzyme catalyses [protein]-L-isoaspartate + S-adenosyl-L-methionine = [protein]-L-isoaspartate alpha-methyl ester + S-adenosyl-L-homocysteine. In terms of biological role, catalyzes the methyl esterification of L-isoaspartyl residues in peptides and proteins that result from spontaneous decomposition of normal L-aspartyl and L-asparaginyl residues. It plays a role in the repair and/or degradation of damaged proteins. In Thermococcus sibiricus (strain DSM 12597 / MM 739), this protein is Protein-L-isoaspartate O-methyltransferase.